Reading from the N-terminus, the 551-residue chain is Probable terpene synthase 8 (551 aa).

Residues Asp-307, Asp-311, and Glu-457 each coordinate Mg(2+). The DDXXD motif motif lies at 307–311; that stretch reads DDTYD.

This sequence belongs to the terpene synthase family. Requires Mg(2+) as cofactor.

Probable sesquiterpene synthase. This is Probable terpene synthase 8 (TPS8) from Ricinus communis (Castor bean).